Reading from the N-terminus, the 309-residue chain is Tagatose-6-phosphate kinase (309 aa).

Belongs to the carbohydrate kinase PfkB family. LacC subfamily.

It catalyses the reaction D-tagatofuranose 6-phosphate + ATP = D-tagatofuranose 1,6-bisphosphate + ADP + H(+). The protein operates within carbohydrate metabolism; D-tagatose 6-phosphate degradation; D-glyceraldehyde 3-phosphate and glycerone phosphate from D-tagatose 6-phosphate: step 1/2. The polypeptide is Tagatose-6-phosphate kinase (Streptococcus pyogenes serotype M6 (strain ATCC BAA-946 / MGAS10394)).